Consider the following 277-residue polypeptide: MARVEGQVALITGAARGQGRSHAIKLAEEGADVILVDVPNDVVDIGYPLGTADELDQTAKDVENLGRKAIVIHADVRDLESLTAEVDRAVSTLGRLDIVSANAGIASVPFLSHDIPDNTWRQMIDINLTGVWHTAKVAVPHILAGERGGSIVLTSSAAGLKGYAQISHYSAAKHGVVGLMRSLALELAPHRVRVNSLHPTQVNTPMIQNEGTYRIFSPDLENPTREDFEIASTTTNALPIPWVESVDVSNALLFLVSEDARYITGAAIPVDAGTTLK.

An NAD(+)-binding site is contributed by 10–32 (LITGAARGQGRSHAIKLAEEGAD). Substrate is bound at residue S156. Y169 serves as the catalytic Proton acceptor.

This sequence belongs to the short-chain dehydrogenases/reductases (SDR) family. In terms of assembly, homotetramer.

It catalyses the reaction (1S,5R)-carveol + NAD(+) = (R)-carvone + NADH + H(+). The enzyme catalyses (1S,5S)-carveol + NAD(+) = (S)-carvone + NADH + H(+). It participates in terpene metabolism; limonene degradation. With respect to regulation, competitively inhibited by the product (S)- or (R)-carvone. Functionally, catalyzes the oxidation of carveol to carvone, with a strong stereoselectivity since it efficiently converts only the (6S)-stereoisomers, of which (-)-(4R,6S)-trans-carveol is the better substrate. Displays a broad substrate specificity with a preference for substituted cyclohexanols, and does not catalyze the oxidation of primary or short chain aliphatic secondary alcohols. Is also able, albeit more slowly, to oxidize limonene-1,2-diol into 1-hydroxy-2-oxolimonene. This Rhodococcus erythropolis (Arthrobacter picolinophilus) protein is (-)-trans-carveol dehydrogenase (limC).